Here is a 90-residue protein sequence, read N- to C-terminus: Small ribosomal subunit protein uS15 (90 aa).

It belongs to the universal ribosomal protein uS15 family. As to quaternary structure, part of the 30S ribosomal subunit. Forms a bridge to the 50S subunit in the 70S ribosome, contacting the 23S rRNA.

Functionally, one of the primary rRNA binding proteins, it binds directly to 16S rRNA where it helps nucleate assembly of the platform of the 30S subunit by binding and bridging several RNA helices of the 16S rRNA. Forms an intersubunit bridge (bridge B4) with the 23S rRNA of the 50S subunit in the ribosome. The chain is Small ribosomal subunit protein uS15 from Aquifex aeolicus (strain VF5).